A 182-amino-acid polypeptide reads, in one-letter code: tRNA-splicing endonuclease (182 aa).

Residues tyrosine 119, histidine 127, and lysine 158 contribute to the active site.

The protein belongs to the tRNA-intron endonuclease family. Archaeal short subfamily. As to quaternary structure, homotetramer; although the tetramer contains four active sites, only two participate in the cleavage. Therefore, it should be considered as a dimer of dimers.

The catalysed reaction is pretRNA = a 3'-half-tRNA molecule with a 5'-OH end + a 5'-half-tRNA molecule with a 2',3'-cyclic phosphate end + an intron with a 2',3'-cyclic phosphate and a 5'-hydroxyl terminus.. Its function is as follows. Endonuclease that removes tRNA introns. Cleaves pre-tRNA at the 5'- and 3'-splice sites to release the intron. The products are an intron and two tRNA half-molecules bearing 2',3' cyclic phosphate and 5'-OH termini. Recognizes a pseudosymmetric substrate in which 2 bulged loops of 3 bases are separated by a stem of 4 bp. This Saccharolobus islandicus (strain Y.N.15.51 / Yellowstone #2) (Sulfolobus islandicus) protein is tRNA-splicing endonuclease.